A 483-amino-acid polypeptide reads, in one-letter code: MTTPHGLLQYSSGAFSDQVPADDSAEEHGVKDHAMLAPFTAAWQTAISPPLVIERSEGCYVYDVNGTKYLDALAGLLSTALGGSEPRLVKAATEQLNKLPFYHSFWNHTTRPSLDLAKELISMFTAREMGKVFFTNSGSEANDSQVKIVWYYNNALGRPKKKNIISRTQSYHGTTFISASLSGLPTLHQDFDLPGRFVLHTDCPHYWRFHLPGETEEEFATRLADNLENLILKQGPETIAAFIAEPVIGAGGVILPPKTYFEKIQAVVKKYDILFIVDEVITGFGRLGTMFGSDLYNIKPDLVSLAKALSSAYAPIGAILVSPEISDVIHSHSNKLGTFAHGFTYSGHPVSCAVALEALKIYRERDIPGHVTHVAQRFQEGIKAFAAGSPIVGETRGVGLLIATEFTDNKSPYELFPFEWGVGEIFGQECKKRGMMVKVLGNLIAMSPPLIITREEIDKLVSIYGEALKATEERVAELKSKKN.

Pyridoxal 5'-phosphate is bound at residue 138–139 (GS). Substrate is bound at residue Tyr171. Asp278 contributes to the pyridoxal 5'-phosphate binding site. Lys307 serves as a coordination point for substrate. An N6-(pyridoxal phosphate)lysine modification is found at Lys307.

This sequence belongs to the class-III pyridoxal-phosphate-dependent aminotransferase family. As to expression, not detected in roots, stems, flowers or leaves of healthy plants.

It localises to the cytoplasm. It catalyses the reaction 4-aminobutanoate + pyruvate = succinate semialdehyde + L-alanine. The catalysed reaction is 4-aminobutanoate + glyoxylate = succinate semialdehyde + glycine. Transaminase that degrades gamma-amino butyric acid (GABA). This chain is Probable gamma-aminobutyrate transaminase 4 (GABA-T), found in Oryza sativa subsp. japonica (Rice).